The sequence spans 207 residues: Small ribosomal subunit protein uS4 (207 aa).

A disordered region spans residues 31 to 53 (KAKFDSKPGQHGRTSGARTSDFG). The region spanning 97–160 (SRLDNVVYRM…KKQNRIVEAL (64 aa)) is the S4 RNA-binding domain.

The protein belongs to the universal ribosomal protein uS4 family. In terms of assembly, part of the 30S ribosomal subunit. Contacts protein S5. The interaction surface between S4 and S5 is involved in control of translational fidelity.

Its function is as follows. One of the primary rRNA binding proteins, it binds directly to 16S rRNA where it nucleates assembly of the body of the 30S subunit. Functionally, with S5 and S12 plays an important role in translational accuracy. The protein is Small ribosomal subunit protein uS4 of Albidiferax ferrireducens (strain ATCC BAA-621 / DSM 15236 / T118) (Rhodoferax ferrireducens).